Consider the following 218-residue polypeptide: Ras-related protein RABA5e (218 aa).

Position 19 to 26 (Gly19 to Ser26) interacts with GTP. The short motif at Ser41–Phe49 is the Effector region element. Residues Asp67–Gln71, Asn125–Asp128, and Ser155–Ala156 each bind GTP. 2 S-geranylgeranyl cysteine lipidation sites follow: Cys214 and Cys215. At Cys215 the chain carries Cysteine methyl ester. A propeptide spans Ser216–Thr218 (removed in mature form).

This sequence belongs to the small GTPase superfamily. Rab family.

The protein resides in the cell membrane. Intracellular vesicle trafficking and protein transport. The polypeptide is Ras-related protein RABA5e (RABA5E) (Arabidopsis thaliana (Mouse-ear cress)).